Reading from the N-terminus, the 124-residue chain is uncharacterized protein (124 aa).

A run of 3 helical transmembrane segments spans residues 13-33 (LIQI…VLQL), 43-63 (GLFW…PEFF), and 71-91 (GVGR…FYLI).

It to M.thermoautotrophicum MTH137.

The protein localises to the cell membrane. This is an uncharacterized protein from Methanocaldococcus jannaschii (strain ATCC 43067 / DSM 2661 / JAL-1 / JCM 10045 / NBRC 100440) (Methanococcus jannaschii).